Reading from the N-terminus, the 419-residue chain is Gamma-glutamyl phosphate reductase (419 aa).

It belongs to the gamma-glutamyl phosphate reductase family.

Its subcellular location is the cytoplasm. The enzyme catalyses L-glutamate 5-semialdehyde + phosphate + NADP(+) = L-glutamyl 5-phosphate + NADPH + H(+). Its pathway is amino-acid biosynthesis; L-proline biosynthesis; L-glutamate 5-semialdehyde from L-glutamate: step 2/2. Its function is as follows. Catalyzes the NADPH-dependent reduction of L-glutamate 5-phosphate into L-glutamate 5-semialdehyde and phosphate. The product spontaneously undergoes cyclization to form 1-pyrroline-5-carboxylate. The protein is Gamma-glutamyl phosphate reductase of Gloeobacter violaceus (strain ATCC 29082 / PCC 7421).